The sequence spans 216 residues: Cytidylate kinase (216 aa).

Residue 7–15 (GPSGTGKST) participates in ATP binding.

The protein belongs to the cytidylate kinase family. Type 1 subfamily.

The protein localises to the cytoplasm. It carries out the reaction CMP + ATP = CDP + ADP. It catalyses the reaction dCMP + ATP = dCDP + ADP. This Chlamydia felis (strain Fe/C-56) (Chlamydophila felis) protein is Cytidylate kinase.